A 472-amino-acid chain; its full sequence is Ribulose bisphosphate carboxylase large chain (472 aa).

Positions 120 and 170 each coordinate substrate. The active-site Proton acceptor is the Lys172. Lys174 provides a ligand contact to substrate. Residues Lys198, Asp200, and Glu201 each contribute to the Mg(2+) site. An N6-carboxylysine modification is found at Lys198. The Proton acceptor role is filled by His291. 3 residues coordinate substrate: Arg292, His324, and Ser376. An Interacts with RbcX2 motif is present at residues 461 to 467 (EIKFEFE).

The protein belongs to the RuBisCO large chain family. Type I subfamily. As to quaternary structure, heterohexadecamer of 8 large chains and 8 small chains; disulfide-linked. The disulfide link is formed within the large subunit homodimers. The exposed C-terminus binds in a cleft in the RbcX2 (shown with endogenous and Anabaena strain CA protein). RbcX2 is displaced by RbcS; as RbcX2 is removed RbcS mediates the ordering of an internal RbcL loop (Thr-64-Leu-70) in a catalytically active conformation. Mg(2+) is required as a cofactor. In terms of processing, the disulfide bond which can form in the large chain dimeric partners within the hexadecamer appears to be associated with oxidative stress and protein turnover.

It localises to the carboxysome. It catalyses the reaction 2 (2R)-3-phosphoglycerate + 2 H(+) = D-ribulose 1,5-bisphosphate + CO2 + H2O. The enzyme catalyses D-ribulose 1,5-bisphosphate + O2 = 2-phosphoglycolate + (2R)-3-phosphoglycerate + 2 H(+). Its function is as follows. RuBisCO catalyzes two reactions: the carboxylation of D-ribulose 1,5-bisphosphate, the primary event in carbon dioxide fixation, as well as the oxidative fragmentation of the pentose substrate in the photorespiration process. Both reactions occur simultaneously and in competition at the same active site. This chain is Ribulose bisphosphate carboxylase large chain (cbbL), found in Synechococcus sp. (strain ATCC 27144 / PCC 6301 / SAUG 1402/1) (Anacystis nidulans).